Here is a 61-residue protein sequence, read N- to C-terminus: Large ribosomal subunit protein uL30 (61 aa).

Belongs to the universal ribosomal protein uL30 family. In terms of assembly, part of the 50S ribosomal subunit.

The chain is Large ribosomal subunit protein uL30 from Lacticaseibacillus casei (strain BL23) (Lactobacillus casei).